Here is a 200-residue protein sequence, read N- to C-terminus: dITP/XTP pyrophosphatase (200 aa).

Substrate is bound at residue 7–12 (TSNKHK). 2 residues coordinate Mg(2+): glutamate 38 and aspartate 73. Aspartate 73 (proton acceptor) is an active-site residue. Residues serine 74, 154–157 (FGYD), lysine 177, and 182–183 (HR) each bind substrate.

It belongs to the HAM1 NTPase family. In terms of assembly, homodimer. It depends on Mg(2+) as a cofactor.

The enzyme catalyses XTP + H2O = XMP + diphosphate + H(+). It catalyses the reaction dITP + H2O = dIMP + diphosphate + H(+). It carries out the reaction ITP + H2O = IMP + diphosphate + H(+). Functionally, pyrophosphatase that catalyzes the hydrolysis of nucleoside triphosphates to their monophosphate derivatives, with a high preference for the non-canonical purine nucleotides XTP (xanthosine triphosphate), dITP (deoxyinosine triphosphate) and ITP. Seems to function as a house-cleaning enzyme that removes non-canonical purine nucleotides from the nucleotide pool, thus preventing their incorporation into DNA/RNA and avoiding chromosomal lesions. This chain is dITP/XTP pyrophosphatase, found in Campylobacter jejuni subsp. jejuni serotype O:6 (strain 81116 / NCTC 11828).